The following is a 191-amino-acid chain: Protein YceI (191 aa).

The first 22 residues, 1–22, serve as a signal peptide directing secretion; the sequence is MKKNLLGFTLASLLFTTGSAVA.

This sequence belongs to the UPF0312 family. Type 1 subfamily.

Its subcellular location is the periplasm. The chain is Protein YceI from Salmonella newport (strain SL254).